A 465-amino-acid polypeptide reads, in one-letter code: 2-methylcitrate synthase, mitochondrial (465 aa).

The CoA site is built by Arg-72 and Lys-190. Residue His-265 participates in oxaloacetate binding. Leu-300 is a CoA binding site. His-301 is an active-site residue. 3 residues coordinate CoA: Val-342, Gly-344, and Tyr-345. Oxaloacetate-binding residues include His-347 and Arg-356. His-347 is a catalytic residue. Thr-394, Lys-395, and Asn-400 together coordinate CoA. Asp-402 is a catalytic residue. Positions 428 and 448 each coordinate oxaloacetate.

It belongs to the citrate synthase family. As to quaternary structure, homodimer.

The protein resides in the mitochondrion matrix. The catalysed reaction is propanoyl-CoA + oxaloacetate + H2O = (2S,3S)-2-methylcitrate + CoA + H(+). The enzyme catalyses oxaloacetate + acetyl-CoA + H2O = citrate + CoA + H(+). It participates in organic acid metabolism; propanoate degradation. Activity is inhibited by p-chloromercuribenzoate (pCMB), monoiodoacetamide, H(2)O(2), ATP, ADP, NADH, NADPH, Hg(2+) and Zn(2+). Functionally, component of the methylcitrate cycle that catalyzes the synthesis of (2S,3S)-2-methylcitrate from propionyl-CoA and oxaloacetate. Plays an important role in detoxification of propionyl-CoA, an inhibitor of both primary and secondary metabolism. Also has citrate synthase activity using as substrates acetyl-CoA and oxaloacetate. This chain is 2-methylcitrate synthase, mitochondrial, found in Yarrowia lipolytica (strain CLIB 122 / E 150) (Yeast).